Here is a 613-residue protein sequence, read N- to C-terminus: UvrABC system protein C (613 aa).

The GIY-YIG domain occupies 20–98 (ERPGVYLMYD…IKRHKPRYNI (79 aa)). The region spanning 209-244 (FDVIESLGHKMQQASDEFEFEKAALYRDKISALRAI) is the UVR domain.

Belongs to the UvrC family. Interacts with UvrB in an incision complex.

Its subcellular location is the cytoplasm. The UvrABC repair system catalyzes the recognition and processing of DNA lesions. UvrC both incises the 5' and 3' sides of the lesion. The N-terminal half is responsible for the 3' incision and the C-terminal half is responsible for the 5' incision. The sequence is that of UvrABC system protein C from Hydrogenovibrio crunogenus (strain DSM 25203 / XCL-2) (Thiomicrospira crunogena).